We begin with the raw amino-acid sequence, 356 residues long: UDP-3-O-acylglucosamine N-acyltransferase (356 aa).

The active-site Proton acceptor is His-242.

This sequence belongs to the transferase hexapeptide repeat family. LpxD subfamily. As to quaternary structure, homotrimer.

It carries out the reaction a UDP-3-O-[(3R)-3-hydroxyacyl]-alpha-D-glucosamine + a (3R)-hydroxyacyl-[ACP] = a UDP-2-N,3-O-bis[(3R)-3-hydroxyacyl]-alpha-D-glucosamine + holo-[ACP] + H(+). The protein operates within bacterial outer membrane biogenesis; LPS lipid A biosynthesis. In terms of biological role, catalyzes the N-acylation of UDP-3-O-acylglucosamine using 3-hydroxyacyl-ACP as the acyl donor. Is involved in the biosynthesis of lipid A, a phosphorylated glycolipid that anchors the lipopolysaccharide to the outer membrane of the cell. In Acinetobacter baumannii (strain AB307-0294), this protein is UDP-3-O-acylglucosamine N-acyltransferase.